Reading from the N-terminus, the 60-residue chain is UPF0337 protein SACOL1680 (60 aa).

The protein belongs to the UPF0337 (CsbD) family.

This chain is UPF0337 protein SACOL1680, found in Staphylococcus aureus (strain COL).